Here is a 345-residue protein sequence, read N- to C-terminus: C5a anaphylatoxin chemotactic receptor 1 (345 aa).

At 1 to 32 the chain is on the extracellular side; the sequence is MMVTVSYDYDYNSTFLPDGFVDNYVERLSFGD. Residues Tyr-9 and Tyr-11 each carry the sulfotyrosine modification. A glycan (N-linked (GlcNAc...) asparagine) is linked at Asn-12. The helical transmembrane segment at 33-59 threads the bilayer; that stretch reads LVAVVIMVVVFLVGVPGNALVVWVTAC. At 60 to 64 the chain is on the cytoplasmic side; sequence EARRH. The helical transmembrane segment at 65–88 threads the bilayer; sequence INAIWFLNLAAADLLSCLALPILL. At 89 to 105 the chain is on the extracellular side; sequence VSTVHLNHWYFGDTACK. A disulfide bond links Cys-104 and Cys-183. The chain crosses the membrane as a helical span at residues 106–127; the sequence is VLPSLILLNMYTSILLLATISA. Topologically, residues 128-148 are cytoplasmic; it reads DRLLLVLSPIWCQRFRGGCLA. The helical transmembrane segment at 149–169 threads the bilayer; sequence WTACGLAWVLALLLSSPSFLY. At 170–195 the chain is on the extracellular side; sequence RRTHNEHFSFKVYCVTDYGRDISKER. Residues 196–221 traverse the membrane as a helical segment; it reads AVALVRLLVGFIVPLITLTACYTFLL. Topologically, residues 222–237 are cytoplasmic; sequence LRTWSRKATRSAKTVK. A helical membrane pass occupies residues 238–260; the sequence is VVVAVVSSFFVFWLPYQVTGILL. Residues 261-277 are Extracellular-facing; sequence AWHSPNSATYRNTKALD. The helical transmembrane segment at 278-298 threads the bilayer; that stretch reads AVCVAFAYINCCINPIIYVVA. Over 299-345 the chain is Cytoplasmic; that stretch reads GHGFQGRLLKSLPSVLRNVLTEESLDKRHQSFARSTVDTMPQKSESV. A phosphoserine mark is found at Ser-309, Ser-312, Ser-322, Ser-329, and Ser-333.

It belongs to the G-protein coupled receptor 1 family. In terms of assembly, homodimer. May also form higher-order oligomers. Interacts (when phosphorylated) with ARRB1 and ARRB2; the interaction is associated with internalization of C5aR. Sulfation plays a critical role in the association of C5aR with C5a, but no significant role in the ability of the receptor to transduce a signal and mobilize calcium in response to a small peptide agonist. In terms of processing, phosphorylated on serine residues in response to C5a binding, resulting in internalization of the receptor and short-term desensitization to C5a. Expressed strongly in macrophages and spleen. Weak expression detected in lung, liver, brain, heart and kidney.

It localises to the cell membrane. The protein localises to the cytoplasmic vesicle. Its function is as follows. Receptor for the chemotactic and inflammatory peptide anaphylatoxin C5a. The ligand interacts with at least two sites on the receptor: a high-affinity site on the extracellular N-terminus, and a second site in the transmembrane region which activates downstream signaling events. Receptor activation stimulates chemotaxis, granule enzyme release, intracellular calcium release and superoxide anion production. This Cavia porcellus (Guinea pig) protein is C5a anaphylatoxin chemotactic receptor 1 (C5AR1).